The primary structure comprises 679 residues: Stress-70 protein, mitochondrial (679 aa).

The N-terminal 46 residues, 1 to 46 (MISASRAVAARLVGAAASRGPTAARHQDGWNGLSHEAFRIVSRRDY), are a transit peptide targeting the mitochondrion. Residues 1-432 (MISASRAVAA…IQGGVLAGDV (432 aa)) are interaction with NFS1. Residues Thr63 and Asn64 each coordinate ADP. Residues 63 to 431 (TNSCVAVMEG…AIQGGVLAGD (369 aa)) form a nucleotide-binding domain (NBD) region. Residue Lys76 is modified to N6-acetyllysine. Thr87 is subject to Phosphothreonine. N6-acetyllysine; alternate occurs at positions 135 and 138. N6-succinyllysine; alternate occurs at positions 135 and 138. Lys143 is subject to N6-acetyllysine. Lys206 is modified (N6-acetyllysine; alternate). Lys206 carries the post-translational modification N6-succinyllysine; alternate. Lys206 carries the post-translational modification N6-malonyllysine; alternate. 2 positions are modified to N6-acetyllysine: Lys234 and Lys288. An N6-acetyllysine; alternate modification is found at Lys300. Lys300 is modified (N6-succinyllysine; alternate). 3 residues coordinate ADP: Glu313, Lys316, and Ser320. Lys368 bears the N6-succinyllysine mark. Residues Gly388 and Arg391 each coordinate ADP. Lys394 is subject to N6-succinyllysine. Position 408 is a phosphoserine (Ser408). Residues 432 to 441 (VTDVLLLDVT) are interdomain linker. The tract at residues 432–679 (VTDVLLLDVT…QKEDQKEEKQ (248 aa)) is interaction with FXN and ISCU. The interval 442–679 (PLSLGIETLG…QKEDQKEEKQ (238 aa)) is substrate-binding domain (SBD). The residue at position 513 (Arg513) is an Omega-N-methylarginine. An N6-acetyllysine; alternate mark is found at Lys567 and Lys600. N6-succinyllysine; alternate occurs at positions 567 and 600. Lys610 carries the post-translational modification N6-succinyllysine. Lys612 carries the N6-acetyllysine modification. Lys646 bears the N6-acetyllysine; alternate mark. Position 646 is an N6-succinyllysine; alternate (Lys646). Residues 656-679 (ASEREGSGSSGTGEQKEDQKEEKQ) form a disordered region. Over residues 669-679 (EQKEDQKEEKQ) the composition is skewed to basic and acidic residues.

This sequence belongs to the heat shock protein 70 family. As to quaternary structure, interacts strongly with the intermediate form of FXN and weakly with its mature form. Interacts with HSCB. Associates with the mitochondrial contact site and cristae organizing system (MICOS) complex, composed of at least MICOS10/MIC10, CHCHD3/MIC19, CHCHD6/MIC25, APOOL/MIC27, IMMT/MIC60, APOO/MIC23/MIC26 and QIL1/MIC13. This complex was also known under the names MINOS or MitOS complex. The MICOS complex associates with mitochondrial outer membrane proteins SAMM50, MTX1, MTX2 and DNAJC11, mitochondrial inner membrane protein TMEM11 and with HSPA9. Interacts with DNLZ, the interaction is required to prevent self-aggregation. Interacts with TESPA1. Interacts with PDPN. Interacts with NFU1, NFS1 and ISCU. Interacts with TP53; the interaction promotes TP53 degradation. Interacts (via SBD domain) with UBXN2A; the interaction with UBXN2A inhibits HSPA9/MOT-2 interaction with and degradation of TP53, thereby promotes TP53 translocation to the nucleus. Interacts with ITPR1 AND VDAC1; this interaction couples ITPR1 to VDAC1. Component of the TIM23 mitochondrial inner membrane pre-sequence translocase complex.

It localises to the mitochondrion. The protein localises to the nucleus. Its subcellular location is the nucleolus. The protein resides in the cytoplasm. It is found in the mitochondrion matrix. The catalysed reaction is ATP + H2O = ADP + phosphate + H(+). The chaperone activity is regulated by ATP-induced allosteric coupling of the nucleotide-binding (NBD) and substrate-binding (SBD) domains. ATP binding in the nucleotide-binding pocket (NBP) leads to a conformational change in the NBD, which is transferred through the interdomain linker (IDL) to the substrate-binding domain (SBD). This elicits a reduced substrate affinity and a faster substrate exchange rate. Upon hydrolysis of ATP to ADP, the protein undergoes a conformational change that increases its affinity for substrate proteins. It cycles through repeated phases of ATP hydrolysis and nucleotide exchange, facilitating repeated cycles of substrate binding and release. Functions in collaboration with co-chaperones. Functions with the co-chaperone, DNLZ, to maintain solubility and regulate ATP hydrolysis. Nucleotide exchange factors, GRPEL1 and GRPEL2, accelerate nucleotide exchange. Mitochondrial chaperone that plays a key role in mitochondrial protein import, folding, and assembly. Plays an essential role in the protein quality control system, the correct folding of proteins, the re-folding of misfolded proteins, and the targeting of proteins for subsequent degradation. These processes are achieved through cycles of ATP binding, ATP hydrolysis, and ADP release, mediated by co-chaperones. In mitochondria, it associates with the TIM (translocase of the inner membrane) protein complex to assist in the import and folding of mitochondrial proteins. Plays an important role in mitochondrial iron-sulfur cluster (ISC) biogenesis, interacts with and stabilizes ISC cluster assembly proteins FXN, NFU1, NFS1 and ISCU. Regulates erythropoiesis via stabilization of ISC assembly. Regulates mitochondrial calcium-dependent apoptosis by coupling two calcium channels, ITPR1 and VDAC1, at the mitochondria-associated endoplasmic reticulum (ER) membrane to facilitate calcium transport from the ER lumen to the mitochondria intermembrane space, providing calcium for the downstream calcium channel MCU, which releases it into the mitochondrial matrix. Although primarily located in the mitochondria, it is also found in other cellular compartments. In the cytosol, it associates with proteins involved in signaling, apoptosis, or senescence. It may play a role in cell cycle regulation via its interaction with and promotion of degradation of TP53. May play a role in the control of cell proliferation and cellular aging. Protects against reactive oxygen species (ROS). Extracellular HSPA9 plays a cytoprotective role by preventing cell lysis following immune attack by the membrane attack complex by disrupting formation of the complex. The chain is Stress-70 protein, mitochondrial from Pongo abelii (Sumatran orangutan).